An 88-amino-acid chain; its full sequence is Elongation factor 1-beta (88 aa).

The protein belongs to the EF-1-beta/EF-1-delta family.

Promotes the exchange of GDP for GTP in EF-1-alpha/GDP, thus allowing the regeneration of EF-1-alpha/GTP that could then be used to form the ternary complex EF-1-alpha/GTP/AAtRNA. This is Elongation factor 1-beta (ef1b) from Thermoplasma volcanium (strain ATCC 51530 / DSM 4299 / JCM 9571 / NBRC 15438 / GSS1).